A 1231-amino-acid chain; its full sequence is Cohesin subunit SA-2 (1231 aa).

The residue at position 1 (Met1) is an N-acetylmethionine. The disordered stretch occupies residues 1–75 (MIAAPEIPTD…GPNRMNGHHQ (75 aa)). Positions 36–48 (KQGKGKTCKKGKK) are enriched in basic residues. The region spanning 293 to 378 (FVHRYRDAIA…SRFKDRIVSM (86 aa)) is the SCD domain. Lys607 bears the N6-acetyllysine mark. Phosphoserine is present on residues Ser1058, Ser1061, Ser1064, and Ser1065. The interval 1064–1083 (SSRGSTVRSKKSKPSTGKRK) is disordered. Residues 1071 to 1082 (RSKKSKPSTGKR) show a composition bias toward basic residues. At Thr1112 the chain carries Phosphothreonine. Residues Ser1177 and Ser1178 each carry the phosphoserine modification.

The protein belongs to the SCC3 family. In terms of assembly, interacts directly with RAD21 in cohesin complex. Cohesin complexes are composed of a heterodimer between a SMC1 protein (SMC1A or SMC1B) and SMC3, which are attached via their hinge domain, and RAD21 which link them at their heads, and one STAG protein (STAG1, STAG2 or STAG3). In cohesin complexes, STAG2 is mutually exclusive with STAG1 and STAG3. Phosphorylated by PLK1. The large dissociation of cohesin from chromosome arms during prophase is partly due to its phosphorylation.

The protein localises to the nucleus. Its subcellular location is the chromosome. It localises to the centromere. Functionally, component of cohesin complex, a complex required for the cohesion of sister chromatids after DNA replication. The cohesin complex apparently forms a large proteinaceous ring within which sister chromatids can be trapped. At anaphase, the complex is cleaved and dissociates from chromatin, allowing sister chromatids to segregate. The cohesin complex may also play a role in spindle pole assembly during mitosis. In Homo sapiens (Human), this protein is Cohesin subunit SA-2 (STAG2).